Here is an 86-residue protein sequence, read N- to C-terminus: BolA-like protein 2 (86 aa).

Residue methionine 1 is modified to N-acetylmethionine.

This sequence belongs to the BolA/IbaG family. Interacts with GLRX3; forms a heterotrimeric complex composed by two BOLA2 molecules and one GLRX3 molecule; linked by [2Fe-2S] clusters.

It localises to the cytoplasm. It is found in the nucleus. Its function is as follows. Acts as a cytosolic iron-sulfur (Fe-S) cluster assembly factor that facilitates [2Fe-2S] cluster insertion into a subset of cytosolic proteins. Acts together with the monothiol glutaredoxin GLRX3. The sequence is that of BolA-like protein 2 (BOLA2) from Homo sapiens (Human).